The primary structure comprises 309 residues: Transcription initiation factor IIB 1 (309 aa).

2 consecutive repeat copies span residues 125–208 (NELE…LREL) and 219–300 (DYVT…ELTQ).

Belongs to the TFIIB family.

Functionally, stabilizes TBP binding to an archaeal box-A promoter. Also responsible for recruiting RNA polymerase II to the pre-initiation complex (DNA-TBP-TFIIB). In Saccharolobus solfataricus (strain ATCC 35092 / DSM 1617 / JCM 11322 / P2) (Sulfolobus solfataricus), this protein is Transcription initiation factor IIB 1.